We begin with the raw amino-acid sequence, 559 residues long: Formate--tetrahydrofolate ligase (559 aa).

Residue 68–75 (TPAGEGKS) participates in ATP binding.

It belongs to the formate--tetrahydrofolate ligase family.

It carries out the reaction (6S)-5,6,7,8-tetrahydrofolate + formate + ATP = (6R)-10-formyltetrahydrofolate + ADP + phosphate. The protein operates within one-carbon metabolism; tetrahydrofolate interconversion. This is Formate--tetrahydrofolate ligase from Clostridium tetani (strain Massachusetts / E88).